The chain runs to 185 residues: Ovomucoid (185 aa).

3 consecutive Kazal-like domains span residues 1–63 (VEVD…ECRE), 64–128 (AVPM…ECRK), and 131–185 (AAVS…FGKC). Cystine bridges form between cysteine 5–cysteine 43, cysteine 22–cysteine 40, cysteine 30–cysteine 61, cysteine 69–cysteine 108, cysteine 86–cysteine 105, cysteine 94–cysteine 126, cysteine 137–cysteine 167, cysteine 145–cysteine 164, and cysteine 153–cysteine 185. Residue asparagine 174 is glycosylated (N-linked (GlcNAc...) asparagine).

Its subcellular location is the secreted. In Meleagris gallopavo (Wild turkey), this protein is Ovomucoid.